A 340-amino-acid chain; its full sequence is Guanine nucleotide-binding protein G(I)/G(S)/G(T) subunit beta-1 (340 aa).

7 WD repeats span residues Gly53–Asp83, Leu95–Ser125, Gly141–Asp170, Gly182–Asp212, Gly224–Asp254, Asn268–Asp298, and Gly310–Asn340.

It belongs to the WD repeat G protein beta family. As to quaternary structure, g proteins are composed of 3 units, alpha, beta and gamma.

In terms of biological role, guanine nucleotide-binding proteins (G proteins) are involved as a modulator or transducer in various transmembrane signaling systems. The beta and gamma chains are required for the GTPase activity, for replacement of GDP by GTP, and for G protein-effector interaction. The protein is Guanine nucleotide-binding protein G(I)/G(S)/G(T) subunit beta-1 (GBETA1) of Homarus americanus (American lobster).